The following is a 199-amino-acid chain: Holliday junction branch migration complex subunit RuvA (199 aa).

The interval 1–64 (MIAFLKGAVF…ENEFKLFGFL (64 aa)) is domain I. Residues 65–143 (DQDELRLFKT…ELKLVEVEKE (79 aa)) form a domain II region. A flexible linker region spans residues 144-148 (QRPLL). A domain III region spans residues 148-199 (LDELMEALEILGYSRSEVLPAIMDLNRNKQLGNIVEENIKLVLKAKAQEMRR).

It belongs to the RuvA family. In terms of assembly, homotetramer. Forms an RuvA(8)-RuvB(12)-Holliday junction (HJ) complex. HJ DNA is sandwiched between 2 RuvA tetramers; dsDNA enters through RuvA and exits via RuvB. An RuvB hexamer assembles on each DNA strand where it exits the tetramer. Each RuvB hexamer is contacted by two RuvA subunits (via domain III) on 2 adjacent RuvB subunits; this complex drives branch migration. In the full resolvosome a probable DNA-RuvA(4)-RuvB(12)-RuvC(2) complex forms which resolves the HJ.

The protein resides in the cytoplasm. The RuvA-RuvB-RuvC complex processes Holliday junction (HJ) DNA during genetic recombination and DNA repair, while the RuvA-RuvB complex plays an important role in the rescue of blocked DNA replication forks via replication fork reversal (RFR). RuvA specifically binds to HJ cruciform DNA, conferring on it an open structure. The RuvB hexamer acts as an ATP-dependent pump, pulling dsDNA into and through the RuvAB complex. HJ branch migration allows RuvC to scan DNA until it finds its consensus sequence, where it cleaves and resolves the cruciform DNA. The chain is Holliday junction branch migration complex subunit RuvA from Syntrophomonas wolfei subsp. wolfei (strain DSM 2245B / Goettingen).